The primary structure comprises 320 residues: Transcription factor MYB80 (320 aa).

HTH myb-type domains follow at residues 9–65 (KENV…RPDL) and 66–116 (KHGQ…KKKL). DNA-binding regions (H-T-H motif) lie at residues 37-61 (WRLIPKNAGLQRCGKSCRLRWTNYL) and 89-112 (WSLIAAQLPGRTDNDVKNYWNTKL). Positions 257–283 (TAAAEEEERRKLKGEVVDQEEIGSEGG) are disordered. The segment covering 263 to 272 (EERRKLKGEV) has biased composition (basic and acidic residues).

As to expression, expressed in the tapetum and middle layer of developing anthers. Expressed in trichomes.

It localises to the nucleus. Functionally, transcription factor that binds to the DNA sequence 5'-CCAACC-3'. Regulates directly PME5, UND and GLOX1. Essential for tapetum development in anthers and microsporogenesis. Regulates the timing of tapetal programmed cell death (PCD) which is critical for pollen development. May act through the activation of UND, encoding an A1 aspartic protease. Required for anther development by regulating tapetum development, callose dissolution and exine formation. Acts upstream of A6 and FAR2/MS2, two genes required for pollen exine formation. Negatively regulates trichome endoreduplication and trichome branching. This Arabidopsis thaliana (Mouse-ear cress) protein is Transcription factor MYB80.